We begin with the raw amino-acid sequence, 677 residues long: mRNA 3'-end-processing protein RNA14 (677 aa).

HAT repeat units follow at residues 56–88 (ESYAKVREVYEQFHNTFPFYSPAWTLQLKGELA), 90–124 (DEFETVEKILAQCLSGKLENNDLSLWSTYLDYIRR), 138–170 (VIVKAFQLVMQKCAIFEPKSSSFWNEYLNFLEQ), 181–214 (QRIDMLREFYKKMLCVPFDNLEKMWNRYTQWEQE), 257–289 (RTANKKNIPQPGTSDSNIQQLQIWLNWIKWERE), and 298–330 (MLSQRISYVYKQGIQYMIFSAEMWYDYSMYISE).

As to quaternary structure, component of the CFIA complex, which is composed of RNA14, RNA15, PCF11 and CLP1. Interacts with FIP1, PFS2, YSH1 and probably also with RNA15. Probably interacts with the phosphorylated CTD domain of RPB1/RNA polymerase II.

The protein localises to the nucleus. It localises to the cytoplasm. Its function is as follows. Component of the cleavage factor IA (CFIA) complex, which is involved in the endonucleolytic cleavage during polyadenylation-dependent pre-mRNA 3'-end formation and cooperates with the cleavage factor NAB4/CFIB and the cleavage and polyadenylation factor (CPF) complex. This Saccharomyces cerevisiae (strain ATCC 204508 / S288c) (Baker's yeast) protein is mRNA 3'-end-processing protein RNA14 (RNA14).